The chain runs to 543 residues: CTP synthase (543 aa).

The amidoligase domain stretch occupies residues 1 to 265 (MARFIFITGG…DSEVLRAFGI (265 aa)). Serine 13 contributes to the CTP binding site. Serine 13 provides a ligand contact to UTP. 14–19 (SLGKGL) contacts ATP. Tyrosine 54 is a binding site for L-glutamine. An ATP-binding site is contributed by aspartate 71. Mg(2+) contacts are provided by aspartate 71 and glutamate 139. CTP contacts are provided by residues 146-148 (DIE), 186-191 (KTKPTQ), and lysine 222. Residues 186 to 191 (KTKPTQ) and lysine 222 each bind UTP. The region spanning 291-542 (TIGVVGKYVS…IEAAVKQSRL (252 aa)) is the Glutamine amidotransferase type-1 domain. An L-glutamine-binding site is contributed by glycine 354. The active-site Nucleophile; for glutamine hydrolysis is cysteine 381. Residues 382 to 385 (LGMQ), glutamate 405, and arginine 470 each bind L-glutamine. Residues histidine 515 and glutamate 517 contribute to the active site.

The protein belongs to the CTP synthase family. As to quaternary structure, homotetramer.

The enzyme catalyses UTP + L-glutamine + ATP + H2O = CTP + L-glutamate + ADP + phosphate + 2 H(+). The catalysed reaction is L-glutamine + H2O = L-glutamate + NH4(+). It carries out the reaction UTP + NH4(+) + ATP = CTP + ADP + phosphate + 2 H(+). It functions in the pathway pyrimidine metabolism; CTP biosynthesis via de novo pathway; CTP from UDP: step 2/2. Allosterically activated by GTP, when glutamine is the substrate; GTP has no effect on the reaction when ammonia is the substrate. The allosteric effector GTP functions by stabilizing the protein conformation that binds the tetrahedral intermediate(s) formed during glutamine hydrolysis. Inhibited by the product CTP, via allosteric rather than competitive inhibition. Catalyzes the ATP-dependent amination of UTP to CTP with either L-glutamine or ammonia as the source of nitrogen. Regulates intracellular CTP levels through interactions with the four ribonucleotide triphosphates. This is CTP synthase from Sphingopyxis alaskensis (strain DSM 13593 / LMG 18877 / RB2256) (Sphingomonas alaskensis).